A 394-amino-acid chain; its full sequence is METAENIPCSMLGDNFKEVCAEKVIRFRPPLYKQRYQFVRDLVDRHEPKKVADLGCGDTKLLKLLKIYPCIQLLVGVDINEEKLHSNGHRLSPYLGEFVKPRDLDLTVTLYHGSVVERDSRLLGFDLITCIELIEHLDSDDLARFPEVVFGYLSPAMVVISTPNAEFNPLFPTVTLRDADHKFEWSRMEFQTWASQVANCYNYCVEFTGVGTPPAGSEHVGYCTQIGVFRKNGGKLSEPSASQQRDQHVYKAVYTTSYPSLQQEKVLKFVLVGELLIQVDRLRLRHQRMLREQEKERGPKPWYTDSSPAPHLLLGAVFTEAEKARIENSPKPFCEGEKFYIPLQRLLTYPKLHRLCADEDRMRSLIADSVCLSSDGSAVVVDLHNSWDYRPEDN.

Residues Asp-78 and Ser-114 each coordinate S-adenosyl-L-methionine. Residues Glu-132, Glu-135, His-136, and His-181 each contribute to the Mg(2+) site.

It belongs to the methyltransferase superfamily. HEN1 family. The cofactor is Mg(2+).

The protein resides in the cytoplasm. The enzyme catalyses small RNA 3'-end nucleotide + S-adenosyl-L-methionine = small RNA 3'-end 2'-O-methylnucleotide + S-adenosyl-L-homocysteine + H(+). In terms of biological role, methyltransferase that adds a 2'-O-methyl group at the 3'-end of piRNAs, a class of 24 to 30 nucleotide RNAs that are generated by a Dicer-independent mechanism and are primarily derived from transposons and other repeated sequence elements. This probably protects the 3'-end of piRNAs from uridylation activity and subsequent degradation. Stabilization of piRNAs is essential for gametogenesis. This is Small RNA 2'-O-methyltransferase (Henmt1) from Rattus norvegicus (Rat).